The chain runs to 311 residues: MAAADDLAFHEFEEAANLLAETPDAATTSQSDKLTSQEHVAVVVGSGIGYGAEGEEEDDKTSLLQDEKPQPRFWTFDYYQSFFDVDTSQVLDRIKGSLLPHPGHNFVRHHLRNRPDLYGPFWICATLAFVLAVTGNLTLVLAQRRDPSIHYSPQFHKVTIAGITIYCYAWLVPLALWGFLRWRQGTRERMGLYTFLETVCVYGYSLFVFIPTVVLWLIPVQWLQWLFGALALALSAAGLVFTLWPVVREDTRLVAAALLSIVVLLHALLALGCKLYFFQPLPLDHVVPAPQAIPPSPNVLLPSSVQPMTTF.

Position 2 is an N-acetylalanine (alanine 2). Topologically, residues 2–120 (AAADDLAFHE…LRNRPDLYGP (119 aa)) are cytoplasmic. A helical membrane pass occupies residues 121 to 141 (FWICATLAFVLAVTGNLTLVL). The Lumenal segment spans residues 142–159 (AQRRDPSIHYSPQFHKVT). Residues 160-180 (IAGITIYCYAWLVPLALWGFL) form a helical membrane-spanning segment. At 181 to 198 (RWRQGTRERMGLYTFLET) the chain is on the cytoplasmic side. A helical transmembrane segment spans residues 199–219 (VCVYGYSLFVFIPTVVLWLIP). Over 220–226 (VQWLQWL) the chain is Lumenal. Residues 227-247 (FGALALALSAAGLVFTLWPVV) traverse the membrane as a helical segment. Over 248–252 (REDTR) the chain is Cytoplasmic. The helical transmembrane segment at 253–273 (LVAAALLSIVVLLHALLALGC) threads the bilayer. At 274–311 (KLYFFQPLPLDHVVPAPQAIPPSPNVLLPSSVQPMTTF) the chain is on the lumenal side.

Belongs to the YIP1 family. Interacts with YIPF6; this interaction may stabilize YIPF2. May also form a ternary complex with YIPF1 and YIPF6.

Its subcellular location is the golgi apparatus. It is found in the cis-Golgi network membrane. The protein resides in the trans-Golgi network membrane. It localises to the late endosome membrane. The polypeptide is Protein YIPF2 (Yipf2) (Rattus norvegicus (Rat)).